Consider the following 270-residue polypeptide: Glucosamine-6-phosphate deaminase (270 aa).

The active-site Proton acceptor; for enolization step is the aspartate 72. The active-site For ring-opening step is aspartate 141. Histidine 143 functions as the Proton acceptor; for ring-opening step in the catalytic mechanism. Glutamate 148 (for ring-opening step) is an active-site residue.

Belongs to the glucosamine/galactosamine-6-phosphate isomerase family. NagB subfamily.

The enzyme catalyses alpha-D-glucosamine 6-phosphate + H2O = beta-D-fructose 6-phosphate + NH4(+). Its pathway is amino-sugar metabolism; N-acetylneuraminate degradation; D-fructose 6-phosphate from N-acetylneuraminate: step 5/5. Allosterically activated by N-acetylglucosamine 6-phosphate (GlcNAc6P). In terms of biological role, catalyzes the reversible isomerization-deamination of glucosamine 6-phosphate (GlcN6P) to form fructose 6-phosphate (Fru6P) and ammonium ion. The polypeptide is Glucosamine-6-phosphate deaminase (Bacteroides fragilis (strain ATCC 25285 / DSM 2151 / CCUG 4856 / JCM 11019 / LMG 10263 / NCTC 9343 / Onslow / VPI 2553 / EN-2)).